Consider the following 506-residue polypeptide: Squalene monooxygenase 1,1 (506 aa).

A run of 2 helical transmembrane segments spans residues 3–23 (LAFP…WTVF) and 47–67 (DADV…YALA). Residues 57-58 (VG), 77-78 (ER), Arg-85, Phe-90, Arg-157, Val-173, Asp-336, and Met-349 each bind FAD. A helical transmembrane segment spans residues 447–467 (LIFHLCGITLSSIGQLLSPFP).

Belongs to the squalene monooxygenase family. FAD is required as a cofactor.

The protein localises to the membrane. It catalyses the reaction squalene + reduced [NADPH--hemoprotein reductase] + O2 = (S)-2,3-epoxysqualene + oxidized [NADPH--hemoprotein reductase] + H2O + H(+). Its pathway is terpene metabolism; lanosterol biosynthesis; lanosterol from farnesyl diphosphate: step 2/3. In terms of biological role, catalyzes the stereospecific oxidation of squalene to (S)-2,3-epoxysqualene, and is considered to be a rate-limiting enzyme in steroid biosynthesis. The polypeptide is Squalene monooxygenase 1,1 (SQP1,1) (Brassica napus (Rape)).